The primary structure comprises 583 residues: Kelch-like protein 35 (583 aa).

Residues 41–119 (TDVVLRAGGR…VYGAGVRLRA (79 aa)) enclose the BTB domain. The 103-residue stretch at 146–248 (LEGRLRAANS…LEHVRLPLLA (103 aa)) folds into the BACK domain. Kelch repeat units lie at residues 301-350 (VIVV…ALRN), 352-394 (VYVS…VVQG), 395-441 (QLFA…SCAG), 443-489 (LFVI…SLED), 490-531 (TIYV…VCDG), and 533-579 (VHIL…TIIQ).

This Homo sapiens (Human) protein is Kelch-like protein 35 (KLHL35).